The sequence spans 464 residues: Fumarate hydratase class II (464 aa).

Residues 98–100, 129–132, 139–141, and Thr187 each bind substrate; these read SGT, HPND, and SSN. His188 functions as the Proton donor/acceptor in the catalytic mechanism. Residue Ser318 is part of the active site. Substrate contacts are provided by residues Ser319 and 324–326; that span reads KVN.

The protein belongs to the class-II fumarase/aspartase family. Fumarase subfamily. Homotetramer.

The protein resides in the cytoplasm. It catalyses the reaction (S)-malate = fumarate + H2O. It functions in the pathway carbohydrate metabolism; tricarboxylic acid cycle; (S)-malate from fumarate: step 1/1. Functionally, involved in the TCA cycle. Catalyzes the stereospecific interconversion of fumarate to L-malate. This is Fumarate hydratase class II from Pasteurella multocida (strain Pm70).